The primary structure comprises 146 residues: Large ribosomal subunit protein uL15y (146 aa).

Basic residues-rich tracts occupy residues 1-14 and 21-30; these read MATA…KRGH and RIGKHRKHPG. A disordered region spans residues 1 to 38; sequence MATALKKNRKKRGHVSAGHGRIGKHRKHPGGRGNAGGM.

It belongs to the universal ribosomal protein uL15 family.

The protein is Large ribosomal subunit protein uL15y (RPL27AB) of Arabidopsis thaliana (Mouse-ear cress).